The chain runs to 1576 residues: eIF-2-alpha kinase GCN2 (1576 aa).

The RWD domain occupies 16 to 127 (NEIEALKAIF…SIVQDYLNDW (112 aa)). The segment at 180–204 (QDELQRRSYETPQSSSKKKTNSKET) is disordered. Protein kinase domains lie at 235 to 511 (VLPL…HVIR) and 556 to 928 (FEEL…EEFI). ATP is bound by residues 562–570 (LGRGGFGEV) and Lys585. The segment at 673-714 (YNSSADEEDPEASDISFQYSNTSDKEGSSDKDSSIEEASSVK) is disordered. The segment covering 695 to 706 (SDKEGSSDKDSS) has biased composition (basic and acidic residues). The Proton acceptor role is filled by Asp772.

The protein belongs to the protein kinase superfamily. Ser/Thr protein kinase family. GCN2 subfamily. As to quaternary structure, homodimer; homodimerization is important for kinase activation by uncharged tRNAs. Interacts (via N-terminal RWD domain) with gcn1 (via N- and C-terminus); this interaction stimulates gcn2 kinase activity in a gcn20-dependent manner in response to amino acid starvation. Interacts (via N-terminus) with the gcn1-gcn20 complex on translating ribosomes in amino acid-starved cells; gcn1 may bind near the ribosomal A-site and promotes the transfer of uncharged tRNAs from the A-site to the tRNA-binding domain in gcn2 for its subsequent kinase activation, and hence allowing fil1 translational activation and derepression of amino acid biosynthetic genes. Autophosphorylated.

The protein resides in the cytoplasm. The catalysed reaction is L-seryl-[protein] + ATP = O-phospho-L-seryl-[protein] + ADP + H(+). It catalyses the reaction L-threonyl-[protein] + ATP = O-phospho-L-threonyl-[protein] + ADP + H(+). With respect to regulation, the integrated stress response (ISR) is activated in response to conditions that promote ribosome collisions: gcn1, which acts as a ribosome collision sensor, activates gcn2. The RQC pathway and the integrated stress response (ISR) antagonize each other: hel2 prevents the activation of gcn2, while gcn2 suppresses RQC activation. Ribosome stalling-induced integrated stress response prefers ribosomes with empty A sites. The kinase activity is stimulated upon binding to uncharged tRNAs. Functionally, metabolic-stress sensing protein kinase that phosphorylates the alpha subunit of eukaryotic translation initiation factor 2 (eIF-2-alpha/SUI2) on 'Ser-52' in response to low amino acid, carbon, or purine availability. Required for adapatation to nutrient starvation by acting as a key component of the integrated stress response (ISR), by which cells alter their translational and transcriptional output in response to starvation. Converts phosphorylated eIF-2-alpha/SUI2 either to a competitive inhibitor of translation initiation factor eIF-2B, leading to a global protein synthesis repression, and thus to a reduced overall utilization of amino acids, or to a translational initiation activation of specific mRNAs, such as the transcriptional activator GCN4, and hence allowing GCN4-mediated reprogramming of transcription to alleviate nutrient depletion. Binds uncharged tRNAs. This is eIF-2-alpha kinase GCN2 from Schizosaccharomyces pombe (strain 972 / ATCC 24843) (Fission yeast).